A 1005-amino-acid polypeptide reads, in one-letter code: Beta-galactosidase (1005 aa).

E455 functions as the Proton donor in the catalytic mechanism. The active-site Nucleophile is the E526.

This sequence belongs to the glycosyl hydrolase 2 family.

It carries out the reaction Hydrolysis of terminal non-reducing beta-D-galactose residues in beta-D-galactosides.. The chain is Beta-galactosidase (lacZ) from Actinobacillus pleuropneumoniae (Haemophilus pleuropneumoniae).